A 305-amino-acid chain; its full sequence is Probable 5-dehydro-4-deoxyglucarate dehydratase (305 aa).

Belongs to the DapA family.

It carries out the reaction 5-dehydro-4-deoxy-D-glucarate + H(+) = 2,5-dioxopentanoate + CO2 + H2O. It functions in the pathway carbohydrate acid metabolism; D-glucarate degradation; 2,5-dioxopentanoate from D-glucarate: step 2/2. This Xanthomonas campestris pv. campestris (strain B100) protein is Probable 5-dehydro-4-deoxyglucarate dehydratase.